We begin with the raw amino-acid sequence, 850 residues long: Adenylate cyclase (850 aa).

The tract at residues 1-535 is catalytic; that stretch reads MYLYIETLKQ…DISHHFPLRL (535 aa). The interval 541 to 850 is regulatory; sequence KALYSPCEIR…SLPTKQCQLH (310 aa).

It belongs to the adenylyl cyclase class-1 family.

The protein localises to the cytoplasm. It carries out the reaction ATP = 3',5'-cyclic AMP + diphosphate. The regulatory domain is involved in the regulation of cyclase activity by the carbon source. In Yersinia pestis, this protein is Adenylate cyclase (cya).